The following is a 678-amino-acid chain: NADPH--cytochrome P450 reductase (678 aa).

Residue Gly-2 is modified to N-acetylglycine. At 2-22 (GDSHEDTSATVPEAVAEEVSL) the chain is on the lumenal side. A helical membrane pass occupies residues 23–43 (FSTTDIVLFSLIVGVLTYWFI). Topologically, residues 44-678 (FKKKKEEIPE…KGRYSLDVWS (635 aa)) are cytoplasmic. Residues 80 to 224 (IIVFYGSQTG…DFITWREQFW (145 aa)) form the Flavodoxin-like domain. FMN is bound by residues 86-91 (SQTGTA), 138-141 (ATYG), 173-182 (LGNKTYEHFN), and Asp-208. One can recognise an FAD-binding FR-type domain in the interval 279–521 (KNPFLAAVTT…FVRKSQFRLP (243 aa)). Residue Arg-298 coordinates NADP(+). FAD contacts are provided by residues Arg-424, 454 to 457 (RYYS), 472 to 474 (CAV), Tyr-478, and 488 to 491 (GVAT). NADP(+) is bound by residues Thr-535, 596–597 (SR), 602–606 (KVYVQ), and Asp-639. Trp-677 contributes to the FAD binding site.

Belongs to the NADPH--cytochrome P450 reductase family. This sequence in the N-terminal section; belongs to the flavodoxin family. It in the C-terminal section; belongs to the flavoprotein pyridine nucleotide cytochrome reductase family. Requires FAD as cofactor. The cofactor is FMN.

It localises to the endoplasmic reticulum membrane. The catalysed reaction is 2 oxidized [cytochrome P450] + NADPH = 2 reduced [cytochrome P450] + NADP(+) + H(+). Functionally, this enzyme is required for electron transfer from NADP to cytochrome P450 in microsomes. It can also provide electron transfer to heme oxygenase and cytochrome B5. This is NADPH--cytochrome P450 reductase from Mus musculus (Mouse).